A 303-amino-acid polypeptide reads, in one-letter code: N-acetyl-D-glucosamine kinase (303 aa).

ATP contacts are provided by residues 4–11 and 133–140; these read GFDIGGTK and GVGGGLVL. H157, C177, C179, and C184 together coordinate Zn(2+).

The protein belongs to the ROK (NagC/XylR) family. NagK subfamily.

The enzyme catalyses N-acetyl-D-glucosamine + ATP = N-acetyl-D-glucosamine 6-phosphate + ADP + H(+). Its pathway is cell wall biogenesis; peptidoglycan recycling. Catalyzes the phosphorylation of N-acetyl-D-glucosamine (GlcNAc) derived from cell-wall degradation, yielding GlcNAc-6-P. The polypeptide is N-acetyl-D-glucosamine kinase (Salmonella paratyphi A (strain ATCC 9150 / SARB42)).